The chain runs to 234 residues: Flagellar L-ring protein (234 aa).

The N-terminal stretch at 1 to 15 is a signal peptide; the sequence is MRYAVICMLLLAASG. Cysteine 16 carries N-palmitoyl cysteine lipidation. Cysteine 16 carries the S-diacylglycerol cysteine lipid modification.

It belongs to the FlgH family. In terms of assembly, the basal body constitutes a major portion of the flagellar organelle and consists of four rings (L,P,S, and M) mounted on a central rod.

Its subcellular location is the cell outer membrane. The protein resides in the bacterial flagellum basal body. In terms of biological role, assembles around the rod to form the L-ring and probably protects the motor/basal body from shearing forces during rotation. The polypeptide is Flagellar L-ring protein (Oleidesulfovibrio alaskensis (strain ATCC BAA-1058 / DSM 17464 / G20) (Desulfovibrio alaskensis)).